The sequence spans 1004 residues: Zinc finger protein 316 (1004 aa).

The interval 1–148 (MAALHTTPDS…EEEEDEDEDD (148 aa)) is disordered. The residue at position 2 (alanine 2) is an N-acetylalanine. A Phosphothreonine modification is found at threonine 7. A Phosphoserine modification is found at serine 10. Over residues 21-60 (GSECDPDQEEEEEEEEKGEEVQEVEEEEEEIVVEEEEEGV) the composition is skewed to acidic residues. Residues 61-72 (AEVVQDAQVEAV) show a composition bias toward low complexity. Acidic residues predominate over residues 73-95 (AEVEVEADVEEEDVKEVLAEEEC). Residue serine 112 is modified to Phosphoserine. Acidic residues predominate over residues 132 to 148 (EDLEEEEEEEEDEDEDD). The KRAB domain occupies 158–229 (VTFEDVAVYF…DSPRPEEGDI (72 aa)). C2H2-type zinc fingers lie at residues 345–367 (TTCD…QRYH), 373–395 (FGCE…QRTH), 401–423 (FPCP…RRIH), 429–451 (YRCA…QRTH), and 457–479 (YPCS…QAVH). A C2H2-type 6; degenerate zinc finger spans residues 485–512 (HCCPDCGQAFRLRADFQRHRRGGGCAEA). The interval 508-574 (GCAEAGGDGP…TPSGKVDPAP (67 aa)) is disordered. Over residues 531–557 (EDTDPGPEGSEVGEADGEAEAAAEERE) the composition is skewed to acidic residues. C2H2-type zinc fingers lie at residues 691–713 (WICS…QRYH), 719–741 (HRCA…RRTH), 747–769 (FPCP…VRGH), 775–797 (FVCG…GRAH), and 803–825 (YACG…QWAH). Lysine 829 participates in a covalent cross-link: Glycyl lysine isopeptide (Lys-Gly) (interchain with G-Cter in SUMO2). 4 C2H2-type zinc fingers span residues 831 to 853 (HRCP…RRTH), 859 to 881 (FRCA…RRGH), 887 to 909 (FPCP…QRTH), and 915 to 937 (YACA…MKTH). Residues 936 to 976 (THRGATAAPGSGSAPAPAPKPEAAAKGPSSAGPGERGSALL) form a disordered region. Residues 939–968 (GATAAPGSGSAPAPAPKPEAAAKGPSSAGP) are compositionally biased toward low complexity. Lysine 955 participates in a covalent cross-link: Glycyl lysine isopeptide (Lys-Gly) (interchain with G-Cter in SUMO2).

Belongs to the krueppel C2H2-type zinc-finger protein family.

The protein localises to the nucleus. May be involved in transcriptional regulation. This Homo sapiens (Human) protein is Zinc finger protein 316 (ZNF316).